The chain runs to 340 residues: Glycerol-3-phosphate dehydrogenase [NAD(P)+] (340 aa).

4 residues coordinate NADPH: serine 11, tryptophan 12, arginine 33, and lysine 106. Residues lysine 106, glycine 137, and serine 139 each contribute to the sn-glycerol 3-phosphate site. Alanine 141 contacts NADPH. The sn-glycerol 3-phosphate site is built by lysine 192, aspartate 245, serine 255, arginine 256, and asparagine 257. The Proton acceptor role is filled by lysine 192. Residue arginine 256 participates in NADPH binding. Valine 280 and glutamate 282 together coordinate NADPH.

Belongs to the NAD-dependent glycerol-3-phosphate dehydrogenase family.

The protein resides in the cytoplasm. The catalysed reaction is sn-glycerol 3-phosphate + NAD(+) = dihydroxyacetone phosphate + NADH + H(+). The enzyme catalyses sn-glycerol 3-phosphate + NADP(+) = dihydroxyacetone phosphate + NADPH + H(+). It participates in membrane lipid metabolism; glycerophospholipid metabolism. Catalyzes the reduction of the glycolytic intermediate dihydroxyacetone phosphate (DHAP) to sn-glycerol 3-phosphate (G3P), the key precursor for phospholipid synthesis. The polypeptide is Glycerol-3-phosphate dehydrogenase [NAD(P)+] (Bacillus cereus (strain ATCC 10987 / NRS 248)).